A 153-amino-acid polypeptide reads, in one-letter code: Endoribonuclease YbeY (153 aa).

Residues H114, H118, and H124 each coordinate Zn(2+).

This sequence belongs to the endoribonuclease YbeY family. Zn(2+) serves as cofactor.

Its subcellular location is the cytoplasm. In terms of biological role, single strand-specific metallo-endoribonuclease involved in late-stage 70S ribosome quality control and in maturation of the 3' terminus of the 16S rRNA. The protein is Endoribonuclease YbeY of Shewanella denitrificans (strain OS217 / ATCC BAA-1090 / DSM 15013).